A 236-amino-acid chain; its full sequence is Phosphoglycolate phosphatase (236 aa).

The active-site Nucleophile is aspartate 23. Aspartate 23 and aspartate 25 together coordinate Mg(2+). Lysine 162 contributes to the substrate binding site. Residues aspartate 185 and aspartate 189 each coordinate Mg(2+).

It belongs to the archaeal SPP-like hydrolase family. Mg(2+) serves as cofactor.

It carries out the reaction 2-phosphoglycolate + H2O = glycolate + phosphate. In terms of biological role, catalyzes the dephosphorylation of 2-phosphoglycolate. The sequence is that of Phosphoglycolate phosphatase from Picrophilus torridus (strain ATCC 700027 / DSM 9790 / JCM 10055 / NBRC 100828 / KAW 2/3).